We begin with the raw amino-acid sequence, 313 residues long: Homoserine O-succinyltransferase (313 aa).

Cys142 acts as the Acyl-thioester intermediate in catalysis. Residues Lys163 and Ser192 each contribute to the substrate site. His235 serves as the catalytic Proton acceptor. Glu237 is a catalytic residue. Residue Arg249 coordinates substrate.

It belongs to the MetA family.

It localises to the cytoplasm. The catalysed reaction is L-homoserine + succinyl-CoA = O-succinyl-L-homoserine + CoA. It participates in amino-acid biosynthesis; L-methionine biosynthesis via de novo pathway; O-succinyl-L-homoserine from L-homoserine: step 1/1. Functionally, transfers a succinyl group from succinyl-CoA to L-homoserine, forming succinyl-L-homoserine. The chain is Homoserine O-succinyltransferase from Vibrio vulnificus (strain CMCP6).